The following is a 349-amino-acid chain: Core protein VP7 (349 aa).

Asn-287 carries N-linked (GlcNAc...) asparagine; by host glycosylation.

The protein belongs to the orbivirus VP7 family. As to quaternary structure, homotrimer that assemble in a complex of 260 capsomers on an inner scaffold composed of VP3.

It localises to the virion. The VP7 protein is one of the five proteins (with VP1, VP3, VP4, and VP6) which form the inner capsid of the virus. This Antilocapra americana (Pronghorn) protein is Core protein VP7 (Segment-7).